Consider the following 501-residue polypeptide: Aldehyde dehydrogenase family 2 member C4 (501 aa).

An NAD(+)-binding site is contributed by 245–250; the sequence is GSTDVG. Residue glutamate 268 is the Proton acceptor of the active site. Residue cysteine 302 is the Nucleophile of the active site.

This sequence belongs to the aldehyde dehydrogenase family. In terms of assembly, homotetramer.

The protein localises to the cytoplasm. It is found in the cytosol. It catalyses the reaction an aldehyde + NAD(+) + H2O = a carboxylate + NADH + 2 H(+). Functionally, involved in ferulic acid and sinapic acid biosynthesis by oxidation of conyferylaldehyde and sinapaldehyde, respectively. Can oxidize L-lactaldehyde. Possesses activity on acetaldehyde and glycolaldehyde in vitro. The chain is Aldehyde dehydrogenase family 2 member C4 (ALDH2C4) from Arabidopsis thaliana (Mouse-ear cress).